A 399-amino-acid polypeptide reads, in one-letter code: Acetate kinase 2 (399 aa).

Mg(2+) is bound at residue N10. K17 provides a ligand contact to ATP. Residue R89 coordinates substrate. The Proton donor/acceptor role is filled by D146. Residues 206 to 210 (HLGNG), 281 to 283 (DCR), and 329 to 333 (GIGEN) contribute to the ATP site. E384 serves as a coordination point for Mg(2+).

This sequence belongs to the acetokinase family. As to quaternary structure, homodimer. Requires Mg(2+) as cofactor. Mn(2+) is required as a cofactor.

Its subcellular location is the cytoplasm. The catalysed reaction is acetate + ATP = acetyl phosphate + ADP. Its pathway is metabolic intermediate biosynthesis; acetyl-CoA biosynthesis; acetyl-CoA from acetate: step 1/2. Its function is as follows. Catalyzes the formation of acetyl phosphate from acetate and ATP. Can also catalyze the reverse reaction. The protein is Acetate kinase 2 of Neisseria meningitidis serogroup A / serotype 4A (strain DSM 15465 / Z2491).